Reading from the N-terminus, the 182-residue chain is MSELTTIARPYAKAVFDFAVEQSEKDKSTVEKWANMLEFLSELIRHDKVQTYLTSTSSTFKLADTVISICSEQLDQYGQNLVRLMAENKRLSVLPAVFNEFKSYVEEYKSLSQVEVISAQQLNDVQQQKIITAMEKRLARKVILNCRIDSSLIAGAIIRTNDFVIDGSCRGQINRLANELRL.

The protein belongs to the ATPase delta chain family. In terms of assembly, F-type ATPases have 2 components, F(1) - the catalytic core - and F(0) - the membrane proton channel. F(1) has five subunits: alpha(3), beta(3), gamma(1), delta(1), epsilon(1). F(0) has three main subunits: a(1), b(2) and c(10-14). The alpha and beta chains form an alternating ring which encloses part of the gamma chain. F(1) is attached to F(0) by a central stalk formed by the gamma and epsilon chains, while a peripheral stalk is formed by the delta and b chains.

It is found in the cell inner membrane. F(1)F(0) ATP synthase produces ATP from ADP in the presence of a proton or sodium gradient. F-type ATPases consist of two structural domains, F(1) containing the extramembraneous catalytic core and F(0) containing the membrane proton channel, linked together by a central stalk and a peripheral stalk. During catalysis, ATP synthesis in the catalytic domain of F(1) is coupled via a rotary mechanism of the central stalk subunits to proton translocation. Its function is as follows. This protein is part of the stalk that links CF(0) to CF(1). It either transmits conformational changes from CF(0) to CF(1) or is implicated in proton conduction. In Histophilus somni (strain 129Pt) (Haemophilus somnus), this protein is ATP synthase subunit delta.